Here is a 1165-residue protein sequence, read N- to C-terminus: DNA-directed RNA polymerase subunit beta' (1165 aa).

Cys60, Cys62, Cys75, and Cys78 together coordinate Zn(2+). Mg(2+) contacts are provided by Asp449, Asp451, and Asp453. 4 residues coordinate Zn(2+): Cys794, Cys868, Cys875, and Cys878.

Belongs to the RNA polymerase beta' chain family. As to quaternary structure, the RNAP catalytic core consists of 2 alpha, 1 beta, 1 beta' and 1 omega subunit. When a sigma factor is associated with the core the holoenzyme is formed, which can initiate transcription. Requires Mg(2+) as cofactor. Zn(2+) is required as a cofactor.

It catalyses the reaction RNA(n) + a ribonucleoside 5'-triphosphate = RNA(n+1) + diphosphate. Functionally, DNA-dependent RNA polymerase catalyzes the transcription of DNA into RNA using the four ribonucleoside triphosphates as substrates. This chain is DNA-directed RNA polymerase subunit beta', found in Acetivibrio thermocellus (strain ATCC 27405 / DSM 1237 / JCM 9322 / NBRC 103400 / NCIMB 10682 / NRRL B-4536 / VPI 7372) (Clostridium thermocellum).